Here is a 469-residue protein sequence, read N- to C-terminus: SWI/SNF complex subunit SWI3B (469 aa).

Residues 1 to 42 are disordered; the sequence is MAMKAPDPGGSGEILPSTPSLSETTSGGAAAASKSAQLPSSS. Low complexity predominate over residues 15-42; the sequence is LPSTPSLSETTSGGAAAASKSAQLPSSS. The SWIRM domain occupies 48–145; it reads IHVPSYSSWF…YNSSASAKPL (98 aa). The SANT domain occupies 223–274; that stretch reads ESKPEWSDKEILLLLEAVMHYGDDWKKVASHVIGRTEKDCVSQFVKLPFGEQ. Composition is skewed to basic and acidic residues over residues 293–306 and 360–369; these read DSDIPESEGIDKDG and DKNASRDPNR. Disordered regions lie at residues 293–314 and 360–387; these read DSDIPESEGIDKDGSSPNKRIK and DKNASRDPNRQDANAASSGETTRNESER. Residues 370–380 are compositionally biased toward polar residues; sequence QDANAASSGET. Positions 423–447 form a coiled coil; that stretch reads VHFEKLDLEMERSRKQLEEVRNLLF.

Homodimers and heterodimers. Interacts with SWI3A, SWI3C, SWI3D, BSH, BRM and FCA (via C-terminus), and (via N-terminus) with HAB1. Interacts with MORC6 and SUVH9. In terms of tissue distribution, expressed in roots, stems, leaves, flowers and siliques.

Its subcellular location is the nucleus. Functionally, component of a multiprotein complex equivalent of the SWI/SNF complex, an ATP-dependent chromatin-remodeling complex, which is required for the positive and negative regulation of gene expression of a large number of genes. It changes chromatin structure by altering DNA-histone contacts within a nucleosome, leading eventually to a change in nucleosome position, thus facilitating or repressing binding of gene-specific transcription factors. May play an essential role in the transition from the vegetative to the reproductive phase of development. May be a positive regulator of ABA signaling. The protein is SWI/SNF complex subunit SWI3B (SWI3B) of Arabidopsis thaliana (Mouse-ear cress).